The following is a 293-amino-acid chain: ATP synthase gamma chain (293 aa).

This sequence belongs to the ATPase gamma chain family. F-type ATPases have 2 components, CF(1) - the catalytic core - and CF(0) - the membrane proton channel. CF(1) has five subunits: alpha(3), beta(3), gamma(1), delta(1), epsilon(1). CF(0) has three main subunits: a, b and c.

The protein localises to the cell membrane. In terms of biological role, produces ATP from ADP in the presence of a proton gradient across the membrane. The gamma chain is believed to be important in regulating ATPase activity and the flow of protons through the CF(0) complex. In Methylacidiphilum infernorum (isolate V4) (Methylokorus infernorum (strain V4)), this protein is ATP synthase gamma chain.